Reading from the N-terminus, the 256-residue chain is Isoprenyl transferase (256 aa).

The disordered stretch occupies residues 1-22 (MLEKFSKWKGNRSNHTTPSHSL). Asp36 is an active-site residue. Position 36 (Asp36) interacts with Mg(2+). Substrate-binding positions include 37–40 (GNGR), Trp41, Arg49, His53, and 81–83 (STE). Asn84 functions as the Proton acceptor in the catalytic mechanism. Substrate is bound by residues Trp85, Arg87, Arg204, and 210–212 (RLS). Residue Glu223 participates in Mg(2+) binding.

The protein belongs to the UPP synthase family. Homodimer. It depends on Mg(2+) as a cofactor.

Catalyzes the condensation of isopentenyl diphosphate (IPP) with allylic pyrophosphates generating different type of terpenoids. This chain is Isoprenyl transferase, found in Halalkalibacterium halodurans (strain ATCC BAA-125 / DSM 18197 / FERM 7344 / JCM 9153 / C-125) (Bacillus halodurans).